Here is a 478-residue protein sequence, read N- to C-terminus: MLMDHPNWLKQRAELTPDRMAVIQGDHKLTFIQLFHEAKKTAGRLKSFGLKNGDTAALLLTNRMEMVIAVHACFLLGVRIVLLNTKLSMAERSYQIEHSEAKLLLTEKPFIEEHRGGQPARAVDIEDVQNAACPPVTEIESIHLDDAATIMYTSGTTGRPKGVMQTFANHYFSAVSSALNLGLQEHDRWLIALPLFHISGLSALFKSVIYGMTVVLHQRFDAEEVLRSIKDQQVTIASVVQTMLSRLAAKVDRCPGSLRCLLLGGGPAPLSLLEECKRKRLPVVQSYGMTETCSQIATLAPEYSIEKLGSAGKPLFASSIKIEKNGTECQPGEHGEITVKGPTVMKGYLKNEAANKDSFNDGWFKTGDIGYFDDDGFLYVLDRRSDLIISGGENIYPAEVEAVLLSHPNVAEAGVKGVDDKTWGKVPHAYLVADSPVDEEELSEFCKERLASYKVPKAFHFVDRLPRNASNKLMRHKL.

It belongs to the ATP-dependent AMP-binding enzyme family. MenE subfamily.

It carries out the reaction 2-succinylbenzoate + ATP + CoA = 2-succinylbenzoyl-CoA + AMP + diphosphate. It functions in the pathway quinol/quinone metabolism; 1,4-dihydroxy-2-naphthoate biosynthesis; 1,4-dihydroxy-2-naphthoate from chorismate: step 5/7. Its pathway is quinol/quinone metabolism; menaquinone biosynthesis. Functionally, converts 2-succinylbenzoate (OSB) to 2-succinylbenzoyl-CoA (OSB-CoA). This chain is 2-succinylbenzoate--CoA ligase, found in Bacillus licheniformis (strain ATCC 14580 / DSM 13 / JCM 2505 / CCUG 7422 / NBRC 12200 / NCIMB 9375 / NCTC 10341 / NRRL NRS-1264 / Gibson 46).